Reading from the N-terminus, the 410-residue chain is Peptidase T (410 aa).

His-79 contributes to the Zn(2+) binding site. Asp-81 is a catalytic residue. A Zn(2+)-binding site is contributed by Asp-142. Glu-176 functions as the Proton acceptor in the catalytic mechanism. Residues Glu-177, Asp-199, and His-381 each contribute to the Zn(2+) site.

This sequence belongs to the peptidase M20B family. Requires Zn(2+) as cofactor.

The protein localises to the cytoplasm. The catalysed reaction is Release of the N-terminal residue from a tripeptide.. Functionally, cleaves the N-terminal amino acid of tripeptides. The polypeptide is Peptidase T (Listeria monocytogenes serotype 4b (strain CLIP80459)).